Reading from the N-terminus, the 94-residue chain is Putative regulatory protein THA_332 (94 aa).

It belongs to the RemA family.

The sequence is that of Putative regulatory protein THA_332 from Thermosipho africanus (strain TCF52B).